A 352-amino-acid chain; its full sequence is Ion-translocating oxidoreductase complex subunit D (352 aa).

5 helical membrane-spanning segments follow: residues 20–40 (IMLL…WFFG), 42–62 (GTLV…ALVL), 78–109 (ALLT…VIIA), 123–143 (PAMI…TSWL), and 148–168 (IAVN…GHTA). T187 is subject to FMN phosphoryl threonine. The next 5 helical transmembrane spans lie at 214-234 (ILAG…GVWL), 242-262 (WHIP…GWLF), 267-287 (LAAP…FFIL), 301-321 (LIFG…GGYP), and 322-342 (DGVA…DYYT).

It belongs to the NqrB/RnfD family. In terms of assembly, the complex is composed of six subunits: RsxA, RsxB, RsxC, RsxD, RsxE and RsxG. The cofactor is FMN.

Its subcellular location is the cell inner membrane. Functionally, part of a membrane-bound complex that couples electron transfer with translocation of ions across the membrane. Required to maintain the reduced state of SoxR. The sequence is that of Ion-translocating oxidoreductase complex subunit D from Shigella dysenteriae serotype 1 (strain Sd197).